The following is a 372-amino-acid chain: 1,3,6,8-tetrahydroxynaphthalene synthase (372 aa).

The active site involves C138.

It belongs to the thiolase-like superfamily. Chalcone/stilbene synthases family. Homodimer.

The catalysed reaction is 5 malonyl-CoA + 5 H(+) = naphthalene-1,3,6,8-tetrol + 5 CO2 + 5 CoA + H2O. The protein operates within pigment biosynthesis; melanin biosynthesis. Functionally, involved in the biosynthesis of melanin but also various secondary metabolites containing a naphthoquinone ring. Catalyzes the iterative condensation of five CoA-linked malonyl units to form a pentaketide intermediate. THNS subsequently catalyzes the dual intramolecular Claisen and aldol condensations of this linear intermediate to produce the fused ring of 1,3,6,8-tetrahydroxynaphthalene (THN). The chain is 1,3,6,8-tetrahydroxynaphthalene synthase from Streptomyces griseus.